Here is a 406-residue protein sequence, read N- to C-terminus: MVPPPPSRGGAARGQLGRSLGPLLLLLALGHTWTYREEPEDGDREICSESKIATTKYPCLKSSGELTTCYRKKCCKGYKFVLGQCIPEDYDVCAEAPCEQQCTDNFGRVLCTCYPGYRYDRERHRKREKPYCLDIDECASSNGTLCAHICINTLGSYRCECREGYIREDDGKTCTRGDKYPNDTGHEKSENMVKAGTCCATCKEFYQMKQTVLQLKQKIALLPNNAADLGKYITGDKVLASNTYLPGPPGLPGGQGPPGSPGPKGSPGFPGMPGPPGQPGPRGSMGPMGPSPDLSHIKQGRRGPVGPPGAPGRDGSKGERGAPGPRGSPGPPGSFDFLLLMLADIRNDITELQEKVFGHRTHSSAEEFPLPQEFPSYPEAMDLGSGDDHPRRTETRDLRAPRDFYP.

The N-terminal stretch at 1 to 34 (MVPPPPSRGGAARGQLGRSLGPLLLLLALGHTWT) is a signal peptide. One can recognise an EGF-like; calcium-binding domain in the interval 134 to 175 (DIDECASSNGTLCAHICINTLGSYRCECREGYIREDDGKTCT). Intrachain disulfides connect Cys138–Cys150, Cys146–Cys159, and Cys161–Cys174. Residue Asn142 is glycosylated (N-linked (GlcNAc...) asparagine). The N-linked (GlcNAc...) asparagine glycan is linked to Asn182. 2 disordered regions span residues 244 to 335 (YLPG…PGSF) and 360 to 406 (RTHS…DFYP). 2 consecutive Collagen-like domains span residues 245 to 290 (LPGP…PMGP) and 300 to 333 (GRRG…GPPG). Residues 270 to 279 (PGMPGPPGQP) show a composition bias toward pro residues. Low complexity predominate over residues 281 to 292 (PRGSMGPMGPSP). O-linked (Xyl...) (chondroitin sulfate) serine glycosylation is present at Ser385. The span at 386–406 (GDDHPRRTETRDLRAPRDFYP) shows a compositional bias: basic and acidic residues.

It belongs to the CCBE1 family. As to expression, detected in fibroblasts and urine (at protein level). Not expressed in blood or lymphatic endothelial cells.

The protein localises to the secreted. Its function is as follows. Required for lymphangioblast budding and angiogenic sprouting from venous endothelium during embryogenesis. The protein is Collagen and calcium-binding EGF domain-containing protein 1 (CCBE1) of Homo sapiens (Human).